Reading from the N-terminus, the 462-residue chain is Argininosuccinate lyase (462 aa).

Belongs to the lyase 1 family. Argininosuccinate lyase subfamily.

It is found in the cytoplasm. It catalyses the reaction 2-(N(omega)-L-arginino)succinate = fumarate + L-arginine. The protein operates within amino-acid biosynthesis; L-arginine biosynthesis; L-arginine from L-ornithine and carbamoyl phosphate: step 3/3. The protein is Argininosuccinate lyase of Leuconostoc citreum (strain KM20).